The sequence spans 323 residues: Mortality factor 4-like protein 1 (323 aa).

The 51-residue stretch at 12 to 62 (QEGERVLCFHGPLLYEAKCVKVAIKDKQVKYFIHHSGWNKNWDEWVPESRV) folds into the Tudor-knot domain. A disordered region spans residues 76-143 (LQKANQEQYA…RKKRARVDPT (68 aa)). Residues 94 to 227 (PGKKTSGLQQ…VAGIKEYFNV (134 aa)) are sufficient for interaction with SIN3A. Positions 96–107 (KKTSGLQQKNVD) match the Nuclear localization signal motif. Residue K104 is modified to N6-acetyllysine. Residues 125–191 (STSETPQPPR…FYLPAKKNVD (67 aa)) are interaction with RB1-1. Positions 149–303 (TFMNRVEVKV…FLKYLAKNSA (155 aa)) are sufficient for interaction with PHF12. Positions 152–323 (NRVEVKVKIP…APPEYHRKAV (172 aa)) constitute an MRG domain. The interval 284-305 (LALLLNYLHDFLKYLAKNSATL) is interaction with RB1-2.

Component of the NuA4 histone acetyltransferase complex which contains the catalytic subunit KAT5/TIP60 and the subunits EP400, TRRAP/PAF400, BRD8/SMAP, EPC1, DMAP1/DNMAP1, RUVBL1/TIP49, RUVBL2, ING3, actin, ACTL6A/BAF53A, MORF4L1/MRG15, MORF4L2/MRGX, MRGBP, YEATS4/GAS41, VPS72/YL1 and MEAF6. The NuA4 complex interacts with MYC and the adenovirus E1A protein. MORF4L1 may also participate in the formation of NuA4 related complexes which lack the KAT5/TIP60 catalytic subunit, but which include the SWI/SNF related protein SRCAP. Component of the mSin3A histone deacetylase complex, which includes SIN3A, HDAC2, ARID4B, MORF4L1, RBBP4/RbAp48, and RBBP7/RbAp46. May also interact with PHF12 and one or more as yet undefined members of the TLE (transducin-like enhancer of split) family of transcriptional repressors. Component of the SIN3B complex, which includes SIN3B, HDAC2 or HDAC1, PHF12 and MORF4L1. Interacts with RB1 and KAT8. Interacts with the N-terminus of MRFAP1. Found in a complex composed of MORF4L1, MRFAP1 and RB1. Interacts with the entire BRCA complex, which contains BRCA1, PALB2, BRCA2 and RAD51. Interacts with PALB2. Forms a complex with MSL1 and NUPR1.

Its subcellular location is the nucleus. In terms of biological role, component of the NuA4 histone acetyltransferase (HAT) complex which is involved in transcriptional activation of select genes principally by acetylation of nucleosomal histones H4 and H2A. This modification may both alter nucleosome - DNA interactions and promote interaction of the modified histones with other proteins which positively regulate transcription. This complex may be required for the activation of transcriptional programs associated with oncogene and proto-oncogene mediated growth induction, tumor suppressor mediated growth arrest and replicative senescence, apoptosis, and DNA repair. The NuA4 complex ATPase and helicase activities seem to be, at least in part, contributed by the association of RUVBL1 and RUVBL2 with EP400. NuA4 may also play a direct role in DNA repair when directly recruited to sites of DNA damage. As part of the SIN3B complex represses transcription and counteracts the histone acetyltransferase activity of EP300 through the recognition H3K27ac marks by PHF12 and the activity of the histone deacetylase HDAC2. SIN3B complex is recruited downstream of the constitutively active genes transcriptional start sites through interaction with histones and mitigates histone acetylation and RNA polymerase II progression within transcribed regions contributing to the regulation of transcription. Required for homologous recombination repair (HRR) and resistance to mitomycin C (MMC). Involved in the localization of PALB2, BRCA2 and RAD51, but not BRCA1, to DNA-damage foci. The chain is Mortality factor 4-like protein 1 (MORF4L1) from Pongo abelii (Sumatran orangutan).